Here is a 130-residue protein sequence, read N- to C-terminus: Flagellar assembly factor FliW (130 aa).

The protein belongs to the FliW family. In terms of assembly, interacts with translational regulator CsrA and flagellin(s).

The protein resides in the cytoplasm. In terms of biological role, acts as an anti-CsrA protein, binds CsrA and prevents it from repressing translation of its target genes, one of which is flagellin. Binds to flagellin and participates in the assembly of the flagellum. The protein is Flagellar assembly factor FliW of Borrelia duttonii (strain Ly).